The chain runs to 346 residues: Nitrilase 1 (346 aa).

N-acetylserine is present on Ser2. In terms of domain architecture, CN hydrolase spans 25-297; the sequence is VRVTIVQSST…EGLVTADIDL (273 aa). The active-site Proton acceptor is Glu65. Lys152 (proton donor) is an active-site residue. The active-site Nucleophile is Cys186.

The protein belongs to the carbon-nitrogen hydrolase superfamily. Nitrilase family. In terms of assembly, interacts with DEK3. In terms of tissue distribution, expressed in cotyledons, hypocotyls, leaves, roots, stems, flowers and siliques.

It carries out the reaction a nitrile + 2 H2O = a carboxylate + NH4(+). Its function is as follows. Can convert indole-3-acetonitrile to the plant hormone indole-3-acetic acid. The chain is Nitrilase 1 from Arabidopsis thaliana (Mouse-ear cress).